A 310-amino-acid polypeptide reads, in one-letter code: Fucose-specific lectin (310 aa).

6 consecutive repeat copies span residues 1–53 (MSTP…KNVI), 54–103 (AKAK…AGAK), 104–151 (FTVA…EGTN), 152–209 (LGVA…FDKA), 210–256 (PPRC…DKRT), and 257–310 (ITPV…PPAE). The 6 X approximate tandem repeats stretch occupies residues 1 to 310 (MSTPGAQEVL…LGRRALPPAE (310 aa)). Beta-L-fucose contacts are provided by Arg-25, Glu-37, Trp-44, Arg-73, Glu-85, Trp-94, Arg-126, Glu-138, Trp-146, Arg-177, Gln-189, Trp-198, Arg-230, Gln-242, Arg-277, and Glu-291.

This sequence belongs to the fungal fucose-specific lectin family.

Lectin that specifically binds to L-fucose and weakly reacts with mannose and N-acetyl-neuraminic acid. Has strongest preference for the alpha-1,6-fucosylated chain (core fucose) on glycoproteins among alpha-1,2-, alpha-1,3-, alpha-1,4-, and alpha-1,6-fucosylated chains. Binds to fucose residues of IgE in mice and human, causing antigen-independent IgE-mediated mast cell activation and anaphylactoid reactions in mice and is possibly implicated in allergic response to Aspergillus oryzae in humans. Induces secretion of pro-inflammatory cytokines IL6 and IL8 implicated in ocular diseases such as mycotic keratitis, probably through its interaction with host toll-like receptors TLR2 and TLR4, followed by up-regulation of pro-inflammatory cytokines. This is Fucose-specific lectin from Aspergillus oryzae (Yellow koji mold).